Consider the following 147-residue polypeptide: Fibromodulin (147 aa).

LRR repeat units follow at residues 1–15, 16–37, 40–61, 63–84, 85–105, and 108–128; these read LDHN…PLPR, SLRE…ALEG, NLTA…MRGL, SLIL…LPSA, LEQL…YFRG, and KLLY…ASNT. Asn-5 is a glycosylation site (N-linked (GlcNAc...) asparagine). An N-linked (GlcNAc...) asparagine glycan is attached at Asn-40. Residue Asn-130 is glycosylated (N-linked (GlcNAc...) asparagine). The LRR 7 repeat unit spans residues 133-147; it reads SLLELDLSYNQLQKI.

This sequence belongs to the small leucine-rich proteoglycan (SLRP) family. SLRP class II subfamily. In terms of assembly, binds to type I and type II collagen. In terms of processing, binds keratan sulfate chains. Sulfated on tyrosine residues. Post-translationally, the N-terminus is blocked by a pyrrolidone carboxylic acid generated by post-translational modification of N-terminal glutamine.

The protein localises to the secreted. It is found in the extracellular space. The protein resides in the extracellular matrix. Functionally, affects the rate of fibrils formation. May have a primary role in collagen fibrillogenesis. The protein is Fibromodulin (FMOD) of Oryctolagus cuniculus (Rabbit).